The following is a 61-amino-acid chain: Large ribosomal subunit protein uL30 (61 aa).

It belongs to the universal ribosomal protein uL30 family. In terms of assembly, part of the 50S ribosomal subunit.

This chain is Large ribosomal subunit protein uL30, found in Francisella philomiragia subsp. philomiragia (strain ATCC 25017 / CCUG 19701 / FSC 153 / O#319-036).